A 156-amino-acid polypeptide reads, in one-letter code: Oleosin Zm-I (156 aa).

Residues 1–30 (MADHHRGATGGGGGYGDLQRGGGMHGEAQQ) are disordered. Ala2 carries the N-acetylalanine modification. The interval 2 to 42 (ADHHRGATGGGGGYGDLQRGGGMHGEAQQQQKQGAMMTALK) is polar. A compositionally biased stretch (gly residues) spans 8–25 (ATGGGGGYGDLQRGGGMH). The interval 43–114 (AATAATFGGS…AALSVFSWMY (72 aa)) is hydrophobic. 2 helical membrane passes run 51-71 (GSML…LTVA) and 95-115 (GFVT…WMYK).

The protein belongs to the oleosin family. In terms of processing, the N-terminus is blocked.

Its subcellular location is the lipid droplet. It is found in the membrane. Its function is as follows. May have a structural role to stabilize the lipid body during desiccation of the seed by preventing coalescence of the oil. Probably interacts with both lipid and phospholipid moieties of lipid bodies. May also provide recognition signals for specific lipase anchorage in lipolysis during seedling growth. This is Oleosin Zm-I (OLE16) from Zea mays (Maize).